A 473-amino-acid polypeptide reads, in one-letter code: Photosystem II CP43 reaction center protein (473 aa).

Positions 1-14 (MKTLYSLRRYFHVE) are excised as a propeptide. Thr-15 is subject to N-acetylthreonine. Thr-15 is modified (phosphothreonine). 5 consecutive transmembrane segments (helical) span residues 69 to 93 (LFEVAHFVPEKPMYEQGLILLPHLA), 134 to 155 (LIGPETLEESYPFFGYLWKDKN), 178 to 200 (KAMYFGGVYDTWAPGGGDVRVIS), 255 to 275 (KPFAWARRAFVWSGEAYLSYS), and 291 to 312 (WFNNTVYPSEFFGPTGPEASQA). [CaMn4O5] cluster is bound at residue Glu-367. Residues 447–471 (RARAAAAGFEKGIDRDTEPVLSMRP) traverse the membrane as a helical segment.

Belongs to the PsbB/PsbC family. PsbC subfamily. PSII is composed of 1 copy each of membrane proteins PsbA, PsbB, PsbC, PsbD, PsbE, PsbF, PsbH, PsbI, PsbJ, PsbK, PsbL, PsbM, PsbT, PsbX, PsbY, PsbZ, Psb30/Ycf12, at least 3 peripheral proteins of the oxygen-evolving complex and a large number of cofactors. It forms dimeric complexes. Binds multiple chlorophylls and provides some of the ligands for the Ca-4Mn-5O cluster of the oxygen-evolving complex. It may also provide a ligand for a Cl- that is required for oxygen evolution. PSII binds additional chlorophylls, carotenoids and specific lipids. is required as a cofactor.

Its subcellular location is the plastid. The protein resides in the chloroplast thylakoid membrane. One of the components of the core complex of photosystem II (PSII). It binds chlorophyll and helps catalyze the primary light-induced photochemical processes of PSII. PSII is a light-driven water:plastoquinone oxidoreductase, using light energy to abstract electrons from H(2)O, generating O(2) and a proton gradient subsequently used for ATP formation. The sequence is that of Photosystem II CP43 reaction center protein from Ostreococcus tauri.